A 241-amino-acid polypeptide reads, in one-letter code: Pyridoxine 5'-phosphate synthase (241 aa).

N7 contacts 3-amino-2-oxopropyl phosphate. 1-deoxy-D-xylulose 5-phosphate is bound at residue 9-10 (DH). Residue R18 coordinates 3-amino-2-oxopropyl phosphate. H43 acts as the Proton acceptor in catalysis. 2 residues coordinate 1-deoxy-D-xylulose 5-phosphate: R45 and H50. E70 acts as the Proton acceptor in catalysis. T100 is a binding site for 1-deoxy-D-xylulose 5-phosphate. Catalysis depends on H191, which acts as the Proton donor. 3-amino-2-oxopropyl phosphate contacts are provided by residues G192 and 213–214 (GH).

This sequence belongs to the PNP synthase family. In terms of assembly, homooctamer; tetramer of dimers.

Its subcellular location is the cytoplasm. The enzyme catalyses 3-amino-2-oxopropyl phosphate + 1-deoxy-D-xylulose 5-phosphate = pyridoxine 5'-phosphate + phosphate + 2 H2O + H(+). Its pathway is cofactor biosynthesis; pyridoxine 5'-phosphate biosynthesis; pyridoxine 5'-phosphate from D-erythrose 4-phosphate: step 5/5. Functionally, catalyzes the complicated ring closure reaction between the two acyclic compounds 1-deoxy-D-xylulose-5-phosphate (DXP) and 3-amino-2-oxopropyl phosphate (1-amino-acetone-3-phosphate or AAP) to form pyridoxine 5'-phosphate (PNP) and inorganic phosphate. This is Pyridoxine 5'-phosphate synthase from Acidithiobacillus ferrooxidans (strain ATCC 23270 / DSM 14882 / CIP 104768 / NCIMB 8455) (Ferrobacillus ferrooxidans (strain ATCC 23270)).